We begin with the raw amino-acid sequence, 426 residues long: Dihydroorotase (426 aa).

Histidine 58 and histidine 60 together coordinate Zn(2+). Residues histidine 60–arginine 62 and asparagine 92 contribute to the substrate site. Residues aspartate 150, histidine 177, and histidine 230 each contribute to the Zn(2+) site. Asparagine 276 contacts substrate. Aspartate 303 is a binding site for Zn(2+). Residue aspartate 303 is part of the active site. Substrate-binding positions include histidine 307 and phenylalanine 321–glycine 322.

Belongs to the metallo-dependent hydrolases superfamily. DHOase family. Class I DHOase subfamily. Zn(2+) serves as cofactor.

The catalysed reaction is (S)-dihydroorotate + H2O = N-carbamoyl-L-aspartate + H(+). Its pathway is pyrimidine metabolism; UMP biosynthesis via de novo pathway; (S)-dihydroorotate from bicarbonate: step 3/3. Its function is as follows. Catalyzes the reversible cyclization of carbamoyl aspartate to dihydroorotate. This Listeria welshimeri serovar 6b (strain ATCC 35897 / DSM 20650 / CCUG 15529 / CIP 8149 / NCTC 11857 / SLCC 5334 / V8) protein is Dihydroorotase.